The sequence spans 118 residues: UPF0102 protein Csac_2148 (118 aa).

The protein belongs to the UPF0102 family.

The polypeptide is UPF0102 protein Csac_2148 (Caldicellulosiruptor saccharolyticus (strain ATCC 43494 / DSM 8903 / Tp8T 6331)).